Reading from the N-terminus, the 293-residue chain is Thiamine-monophosphate kinase (293 aa).

Mg(2+)-binding residues include Glu25, Val39, Asp40, Asp68, and Asp113. Residues 112 to 113 (GD) and Arg136 each bind ATP. Asp194 serves as a coordination point for Mg(2+). An ATP-binding site is contributed by Ser196. Asp197 is a Mg(2+) binding site. Positions 243 and 286 each coordinate substrate.

It belongs to the thiamine-monophosphate kinase family. As to quaternary structure, homodimer.

The catalysed reaction is thiamine phosphate + ATP = thiamine diphosphate + ADP. It functions in the pathway cofactor biosynthesis; thiamine diphosphate biosynthesis; thiamine diphosphate from thiamine phosphate: step 1/1. Is inhibited by AMP; the mode of AMP inhibition is uncompetitive for both TMP and ATP. Catalyzes the ATP-dependent phosphorylation of thiamine-monophosphate (TMP) to form thiamine-pyrophosphate (TPP), the active form of vitamin B1. The protein is Thiamine-monophosphate kinase of Pyrobaculum calidifontis (strain DSM 21063 / JCM 11548 / VA1).